The chain runs to 502 residues: Probable cytosol aminopeptidase (502 aa).

Lys258 and Asp263 together coordinate Mn(2+). The active site involves Lys270. Mn(2+)-binding residues include Asp281, Asp340, and Glu342. Residue Arg344 is part of the active site.

Belongs to the peptidase M17 family. Requires Mn(2+) as cofactor.

It is found in the cytoplasm. The enzyme catalyses Release of an N-terminal amino acid, Xaa-|-Yaa-, in which Xaa is preferably Leu, but may be other amino acids including Pro although not Arg or Lys, and Yaa may be Pro. Amino acid amides and methyl esters are also readily hydrolyzed, but rates on arylamides are exceedingly low.. It carries out the reaction Release of an N-terminal amino acid, preferentially leucine, but not glutamic or aspartic acids.. Presumably involved in the processing and regular turnover of intracellular proteins. Catalyzes the removal of unsubstituted N-terminal amino acids from various peptides. The sequence is that of Probable cytosol aminopeptidase from Clavibacter michiganensis subsp. michiganensis (strain NCPPB 382).